A 75-amino-acid polypeptide reads, in one-letter code: Kappa-scoloptoxin(03)-Ssm1d (75 aa).

Positions 1 to 23 (MKLSMAILLVMALIIFTLDKNYS) are cleaved as a signal peptide.

It belongs to the scoloptoxin-03 family. In terms of processing, contains 3 disulfide bonds. In terms of tissue distribution, expressed by the venom gland.

It localises to the secreted. In terms of biological role, inhibits voltage-gated potassium channels. This chain is Kappa-scoloptoxin(03)-Ssm1d, found in Scolopendra mutilans (Chinese red-headed centipede).